Consider the following 506-residue polypeptide: MEGRGLSELFRNTSEDMFLKAMMENSMGVAAAAPSMEMMGFRNLSQGFREDSEELFNSWLMNGEIPGFSAMNNRPRQPSRLSSEAAGFPNQQHEIAQEHFPTDNLIPQNLAVHSEFTMNHNQQQLKNAAEKGMQASDLLLAKAWFHSTQPMTRSRSSELRKRYAAMQSNMPPITTETIETANKLRQDLTNASTVNSAPMSNTPSQTPTFVSPSSSSTSPLDNPHIVAQDTITSVVSMLKDTLERKKLSSHANGDTSSGISFGFYDSQHFQQNILGGTDIFPLVTTSQIQDSVMLPKVERPTEQGSGNFVAPANQVWLGTASREPSQSGSSTAIPAPSAGFEVCDDLPPIGQAMTVCESTRTNAANGNGTADCRSKGKDFRERILKENLKDDRKKGSLTRMGSISSEQADKGDPTKKRRVERSRKMAEAKERSSTPVIPSDIQVVLKRCETLEKEVRSLKLNLSFMNRKDSEQTKQIEELQKQNEDLVEEKERLLEEIERIVSDTNT.

Disordered regions lie at residues 193 to 223 (TVNSAPMSNTPSQTPTFVSPSSSSTSPLDNP) and 385 to 434 (KENL…RSST). Positions 202–219 (TPSQTPTFVSPSSSSTSP) are enriched in low complexity. A compositionally biased stretch (basic and acidic residues) spans 385-394 (KENLKDDRKK). The short motif at 415–418 (KKRR) is the Nuclear localization signal element. Over residues 422-432 (SRKMAEAKERS) the composition is skewed to basic and acidic residues. Residues 441 to 506 (IQVVLKRCET…IERIVSDTNT (66 aa)) are a coiled coil.

This sequence belongs to the CYCLOPS family. In terms of tissue distribution, highly epressed in roots. Expressed at very low levels in leaves, stems and panicles.

It is found in the nucleus. In terms of biological role, involved in arbuscular mycorrhizal (AM) symbiosis. Required for fungal infection in roots and arbuscule development during AM symbiosis. This is Protein CYCLOPS from Oryza sativa subsp. japonica (Rice).